Here is a 1184-residue protein sequence, read N- to C-terminus: DNA polymerase III subunit alpha (1184 aa).

The protein belongs to the DNA polymerase type-C family. DnaE subfamily. The Pol III holoenzyme complex contains at least 10 different subunits organized into 3 functionally essential subassemblies: the Pol III core, the beta sliding clamp processivity factor and the clamp-loading complex. The Pol III core (subunits alpha, epsilon and theta) contains the polymerase and the 3'-5' exonuclease proofreading activities. The polymerase is tethered to the template via the dimeric beta sliding clamp processivity factor. The clamp loader (also called gamma complex) assembles the beta sliding clamp onto the primed template and plays a central role in the organization and communication at the replication fork. The clamp-loading complex contains delta, delta', psi and chi, and 3 copies of either or both of two different DnaX proteins, gamma and tau. The DNA replisome complex has a single clamp loader (3 tau and 1 each of delta, delta', psi and chi subunits) which binds 3 Pol III cores (1 core on the leading strand and 2 on the lagging strand) each with a beta sliding clamp dimer. Interacts with the beta-sliding clamp (DnaN). Co-immunoprecipitates with DarG in the presence and absence of darT.

Its subcellular location is the cytoplasm. The enzyme catalyses DNA(n) + a 2'-deoxyribonucleoside 5'-triphosphate = DNA(n+1) + diphosphate. Functionally, DNA polymerase III is a complex, multichain enzyme responsible for most of the replicative synthesis in bacteria. Pol III also exhibits 3' to 5' exonuclease activity. The alpha chain is the DNA polymerase. The sequence is that of DNA polymerase III subunit alpha (dnaE1) from Mycobacterium tuberculosis (strain ATCC 25618 / H37Rv).